The following is a 326-amino-acid chain: Nicotianamine synthase 2 (326 aa).

This sequence belongs to the nicotianamine synthase (NAS)-like family. Expressed in roots.

The enzyme catalyses 3 S-adenosyl-L-methionine = nicotianamine + 3 S-methyl-5'-thioadenosine + 3 H(+). Synthesizes nicotianamine, a polyamine that is the first intermediate in the synthesis of the phytosiderophores of the mugineic acid type found in gramineae which serve as a sensor for the physiological iron status within the plant, and/or might be involved in the transport of iron. This chain is Nicotianamine synthase 2 (NAS2), found in Oryza sativa subsp. japonica (Rice).